The primary structure comprises 475 residues: Exodeoxyribonuclease 7 large subunit (475 aa).

Residues 452 to 475 (DHGLNRSSKSKRIKSKQDDQGTLF) form a disordered region. A compositionally biased stretch (basic and acidic residues) spans 466 to 475 (SKQDDQGTLF).

The protein belongs to the XseA family. In terms of assembly, heterooligomer composed of large and small subunits.

It localises to the cytoplasm. It carries out the reaction Exonucleolytic cleavage in either 5'- to 3'- or 3'- to 5'-direction to yield nucleoside 5'-phosphates.. Functionally, bidirectionally degrades single-stranded DNA into large acid-insoluble oligonucleotides, which are then degraded further into small acid-soluble oligonucleotides. In Bartonella quintana (strain Toulouse) (Rochalimaea quintana), this protein is Exodeoxyribonuclease 7 large subunit.